The sequence spans 314 residues: Homoserine O-acetyltransferase (314 aa).

Cys-142 serves as the catalytic Acyl-thioester intermediate. Residues Lys-163 and Ser-192 each contribute to the substrate site. The active-site Proton acceptor is the His-235. Glu-237 is a catalytic residue. Arg-249 provides a ligand contact to substrate.

Belongs to the MetA family.

Its subcellular location is the cytoplasm. It carries out the reaction L-homoserine + acetyl-CoA = O-acetyl-L-homoserine + CoA. The protein operates within amino-acid biosynthesis; L-methionine biosynthesis via de novo pathway; O-acetyl-L-homoserine from L-homoserine: step 1/1. Functionally, transfers an acetyl group from acetyl-CoA to L-homoserine, forming acetyl-L-homoserine. This Streptococcus thermophilus (strain ATCC BAA-250 / LMG 18311) protein is Homoserine O-acetyltransferase.